The chain runs to 822 residues: Probable phosphoketolase (822 aa).

Belongs to the XFP family. The cofactor is thiamine diphosphate.

The protein is Probable phosphoketolase of Nocardia farcinica (strain IFM 10152).